We begin with the raw amino-acid sequence, 132 residues long: Fatty acid-binding protein 2 (132 aa).

Serine 2 carries the N-acetylserine modification. Hexadecanoate contacts are provided by residues glutamine 40 and 128 to 130; that span reads RYY.

It belongs to the calycin superfamily. Fatty-acid binding protein (FABP) family. In terms of assembly, monomer. Midgut.

It localises to the cytoplasm. Binds fatty acids in a 1:1 molar ratio. The chain is Fatty acid-binding protein 2 (MFB2) from Manduca sexta (Tobacco hawkmoth).